A 373-amino-acid chain; its full sequence is Anhydro-N-acetylmuramic acid kinase (373 aa).

12–19 (GTSLDGVD) contacts ATP.

It belongs to the anhydro-N-acetylmuramic acid kinase family.

It catalyses the reaction 1,6-anhydro-N-acetyl-beta-muramate + ATP + H2O = N-acetyl-D-muramate 6-phosphate + ADP + H(+). It functions in the pathway amino-sugar metabolism; 1,6-anhydro-N-acetylmuramate degradation. The protein operates within cell wall biogenesis; peptidoglycan recycling. Functionally, catalyzes the specific phosphorylation of 1,6-anhydro-N-acetylmuramic acid (anhMurNAc) with the simultaneous cleavage of the 1,6-anhydro ring, generating MurNAc-6-P. Is required for the utilization of anhMurNAc either imported from the medium or derived from its own cell wall murein, and thus plays a role in cell wall recycling. This is Anhydro-N-acetylmuramic acid kinase from Salmonella gallinarum (strain 287/91 / NCTC 13346).